The following is a 421-amino-acid chain: MTESVLDYMSRLGRDARAASRLLARAATAQKNRALLAAADALDAARAELSLANEQDLAAGRANGLEPAMLDRLALTPARIDDMIEGLRQVATLPDPIGEIRDMRYVPSGIQIGKMRVPLGVVGIIYESRPNVTIDAASLCLKSGNATILRGGSEAIHSNQAIARCIQQGLAEAGLPAAAVQVVETTDRAAVGALISMPEYVDVIVPRGGKGLIERISREAKVPVIKHLDGICHVYIDVAADLDKAIRVADNAKTQRYAPCNTMETLLVHAGIAERVLPPLATIYREKGVELRGDAATRALLGADVLEATEEDWRTEYNAPILSIRIVDGLDAAIEHINTYGSQHTDAIITENFSDARRFLAEVDSASVMVNASTRFADGFEYGLGAEIGISTDKLHARGPVGLEGLTSEKYVVFGDGHVRT.

Belongs to the gamma-glutamyl phosphate reductase family.

It is found in the cytoplasm. The catalysed reaction is L-glutamate 5-semialdehyde + phosphate + NADP(+) = L-glutamyl 5-phosphate + NADPH + H(+). It participates in amino-acid biosynthesis; L-proline biosynthesis; L-glutamate 5-semialdehyde from L-glutamate: step 2/2. Catalyzes the NADPH-dependent reduction of L-glutamate 5-phosphate into L-glutamate 5-semialdehyde and phosphate. The product spontaneously undergoes cyclization to form 1-pyrroline-5-carboxylate. This Pseudomonas aeruginosa (strain LESB58) protein is Gamma-glutamyl phosphate reductase.